The primary structure comprises 372 residues: tRNA-specific 2-thiouridylase MnmA (372 aa).

Residues glycine 7–serine 14 and methionine 33 each bind ATP. Positions asparagine 104–aspartate 106 are interaction with target base in tRNA. Cysteine 109 acts as the Nucleophile in catalysis. Cysteine 109 and cysteine 202 form a disulfide bridge. An ATP-binding site is contributed by glycine 134. An interaction with tRNA region spans residues lysine 152 to glutamine 154. Residue cysteine 202 is the Cysteine persulfide intermediate of the active site. An interaction with tRNA region spans residues arginine 310–tyrosine 311.

Belongs to the MnmA/TRMU family.

Its subcellular location is the cytoplasm. The enzyme catalyses S-sulfanyl-L-cysteinyl-[protein] + uridine(34) in tRNA + AH2 + ATP = 2-thiouridine(34) in tRNA + L-cysteinyl-[protein] + A + AMP + diphosphate + H(+). In terms of biological role, catalyzes the 2-thiolation of uridine at the wobble position (U34) of tRNA, leading to the formation of s(2)U34. This is tRNA-specific 2-thiouridylase MnmA from Mesomycoplasma hyopneumoniae (strain 232) (Mycoplasma hyopneumoniae).